We begin with the raw amino-acid sequence, 668 residues long: L-type lectin-domain containing receptor kinase I.7 (668 aa).

A signal peptide spans 1-21; that stretch reads MIRGLLLGIIWMIFCVCSSFQ. The Extracellular segment spans residues 22-285; it reads QETPFVYNNF…SSTKKKSTSP (264 aa). The segment at 24–256 is legume-lectin like; it reads TPFVYNNFGH…YQYILGWSFS (233 aa). 5 N-linked (GlcNAc...) asparagine glycosylation sites follow: asparagine 56, asparagine 125, asparagine 167, asparagine 201, and asparagine 223. Residues 286–306 traverse the membrane as a helical segment; it reads VLSVLLGLIAFIVLGILVVAY. Residues 307-668 lie on the Cytoplasmic side of the membrane; sequence LYRRNLYSEV…THSVLYGSGR (362 aa). In terms of domain architecture, Protein kinase spans 341 to 620; that stretch reads FNRSEFLGRG…LNGNLALPEF (280 aa). ATP-binding positions include 347 to 355 and lysine 372; that span reads LGRGGFGEV. Aspartate 468 serves as the catalytic Proton acceptor.

The protein in the C-terminal section; belongs to the protein kinase superfamily. Ser/Thr protein kinase family. In the N-terminal section; belongs to the leguminous lectin family.

It localises to the cell membrane. The enzyme catalyses L-seryl-[protein] + ATP = O-phospho-L-seryl-[protein] + ADP + H(+). It carries out the reaction L-threonyl-[protein] + ATP = O-phospho-L-threonyl-[protein] + ADP + H(+). In terms of biological role, involved in resistance response to the pathogenic oomycetes Phytophthora infestans and Phytophthora capsici. In Arabidopsis thaliana (Mouse-ear cress), this protein is L-type lectin-domain containing receptor kinase I.7.